Here is a 438-residue protein sequence, read N- to C-terminus: Acyl-CoA dehydrogenase apdG (438 aa).

The protein belongs to the acyl-CoA dehydrogenase family. It depends on FAD as a cofactor.

The protein operates within secondary metabolite biosynthesis. Acyl-CoA dehydrogenase; part of the gene cluster that mediates the biosynthesis of aspyridones. The polyketide-amino acid backbone preaspyridone A is first assembled by the PKS-NRPS hybrid apdA. The assembly of preaspyridone A is initiated by loading of malonyl-CoA onto apdA, followed by decarboxylation to yield the acetyl starter unit. The growing polyketide chain then elongates into a tetraketide. The adpA PKS module catalyzes three Claisen condensations, as well as beta-keto processing and methylation. Alpha-methylation step during polyketide synthesis is a prerequisite and a key checkpoint for chain transfer between PKS and NRPS modules. The downstream NRPS module contains the condensation (C), adenylation (A), and thiolation (T) domains and catalyzes the incorporation of tyrosine via the formation of the L-tyrosinyl-thioester and the amide linkage between L-tyrosinyl-thioester and the tetraketide. The bimodular assembly line is terminated with a reductase (R) domain that facilitates formation and release of the tetramic acid product. Because apdA lacks a designated enoylreductase (ER) domain, the required activity is provided the enoyl reductase apdC. ApdC appears to operate with different stereoselectivity in different PKS cycle. Combined with apdC, apdA is proposed to synthesize preaspyridone A via about 20 enzymatic steps. A number of oxidative steps performed successively by the cytochrome P450 monooxygenases apdE and apdB are required for the conversion of preaspyridone A to aspyridone A. The cytochrome P450 monooxygenase apdE is responsible for the oxidative dephenylation of preaspyridone A. Finally, the predicted FAD-dependent monooxygenase apdD and the acyl-CoA dehydrogenase apdG may be involved in the transformation of aspyridone A into aspyridone B. This chain is Acyl-CoA dehydrogenase apdG, found in Emericella nidulans (strain FGSC A4 / ATCC 38163 / CBS 112.46 / NRRL 194 / M139) (Aspergillus nidulans).